Here is a 361-residue protein sequence, read N- to C-terminus: Adenosine kinase (361 aa).

The short motif at 7–15 (PKPKKLKVE) is the Nuclear localization signal element. D34 serves as a coordination point for adenosine. S48 contacts Mg(2+). Y76 carries the post-translational modification Phosphotyrosine. N147 is a binding site for Mg(2+). Residue Q305 coordinates adenosine. Residue D316 is part of the active site. D316 acts as the Proton acceptor in catalysis.

Belongs to the carbohydrate kinase PfkB family. As to quaternary structure, monomer. Mg(2+) serves as cofactor. Widely expressed. Highly expressed in liver, testis, kidney and spleen (at protein level). In brain, expression in most forebrain structures and the cerebellum is higher than in the midbrain and brainstem (at protein level). In terms of tissue distribution, major isoform in testis and kidney. Not detected in most brain regions, except in the cerebellum, where it is expressed at a similar level to that of isoform 2 (at protein level). As to expression, major isoform in spleen and in most brain regions, except in the cerebellum, where it is expressed at a similar level to that of isoform 1 (at protein level).

The protein localises to the nucleus. It is found in the cytoplasm. The catalysed reaction is adenosine + ATP = AMP + ADP + H(+). It functions in the pathway purine metabolism; AMP biosynthesis via salvage pathway; AMP from adenosine: step 1/1. Activity is inhibited by 5-iodotubercidin and 5'-amino-5'-deoxyadenosine. In terms of biological role, catalyzes the phosphorylation of the purine nucleoside adenosine at the 5' position in an ATP-dependent manner. Serves as a potential regulator of concentrations of extracellular adenosine and intracellular adenine nucleotides. The sequence is that of Adenosine kinase (Adk) from Mus musculus (Mouse).